A 238-amino-acid chain; its full sequence is ATP-dependent dethiobiotin synthetase BioD (238 aa).

Residue 12–17 (EVGKTV) coordinates ATP. T16 is a Mg(2+) binding site. K37 is an active-site residue. T41 provides a ligand contact to substrate. Residues D50, 109–112 (EGAG), 170–171 (GS), and 200–202 (PAG) contribute to the ATP site. D50 and E109 together coordinate Mg(2+).

This sequence belongs to the dethiobiotin synthetase family. Homodimer. It depends on Mg(2+) as a cofactor.

The protein resides in the cytoplasm. It catalyses the reaction (7R,8S)-7,8-diammoniononanoate + CO2 + ATP = (4R,5S)-dethiobiotin + ADP + phosphate + 3 H(+). The protein operates within cofactor biosynthesis; biotin biosynthesis; biotin from 7,8-diaminononanoate: step 1/2. In terms of biological role, catalyzes a mechanistically unusual reaction, the ATP-dependent insertion of CO2 between the N7 and N8 nitrogen atoms of 7,8-diaminopelargonic acid (DAPA, also called 7,8-diammoniononanoate) to form a ureido ring. This chain is ATP-dependent dethiobiotin synthetase BioD, found in Streptomyces coelicolor (strain ATCC BAA-471 / A3(2) / M145).